We begin with the raw amino-acid sequence, 637 residues long: Threonine--tRNA ligase (637 aa).

A TGS domain is found at 1-61; it reads MIKISLKNGK…NKDCKVEILT (61 aa). A catalytic region spans residues 242–532; sequence DHRKLGKELD…LIEHYAGAFP (291 aa). The Zn(2+) site is built by C333, H384, and H509.

It belongs to the class-II aminoacyl-tRNA synthetase family. In terms of assembly, homodimer. Zn(2+) serves as cofactor.

It is found in the cytoplasm. It carries out the reaction tRNA(Thr) + L-threonine + ATP = L-threonyl-tRNA(Thr) + AMP + diphosphate + H(+). Its function is as follows. Catalyzes the attachment of threonine to tRNA(Thr) in a two-step reaction: L-threonine is first activated by ATP to form Thr-AMP and then transferred to the acceptor end of tRNA(Thr). Also edits incorrectly charged L-seryl-tRNA(Thr). The protein is Threonine--tRNA ligase of Clostridium kluyveri (strain NBRC 12016).